Here is a 291-residue protein sequence, read N- to C-terminus: Elongation factor Ts (291 aa).

Residues 80–83 form an involved in Mg(2+) ion dislocation from EF-Tu region; the sequence is TDFV.

It belongs to the EF-Ts family.

The protein localises to the cytoplasm. In terms of biological role, associates with the EF-Tu.GDP complex and induces the exchange of GDP to GTP. It remains bound to the aminoacyl-tRNA.EF-Tu.GTP complex up to the GTP hydrolysis stage on the ribosome. This Acinetobacter baylyi (strain ATCC 33305 / BD413 / ADP1) protein is Elongation factor Ts.